A 150-amino-acid chain; its full sequence is Large ribosomal subunit protein uL11 (150 aa).

Belongs to the universal ribosomal protein uL11 family. Part of the ribosomal stalk of the 50S ribosomal subunit. Interacts with L10 and the large rRNA to form the base of the stalk. L10 forms an elongated spine to which L12 dimers bind in a sequential fashion forming a multimeric L10(L12)X complex. One or more lysine residues are methylated.

Its function is as follows. Forms part of the ribosomal stalk which helps the ribosome interact with GTP-bound translation factors. This chain is Large ribosomal subunit protein uL11, found in Ureaplasma parvum serovar 3 (strain ATCC 27815 / 27 / NCTC 11736).